The primary structure comprises 704 residues: Elongation factor G (704 aa).

One can recognise a tr-type G domain in the interval 8-291 (DRVRNIGIMA…AVIDYLASPV (284 aa)). GTP is bound by residues 17 to 24 (AHIDAGKT), 90 to 94 (DTPGH), and 144 to 147 (NKMD).

The protein belongs to the TRAFAC class translation factor GTPase superfamily. Classic translation factor GTPase family. EF-G/EF-2 subfamily.

It localises to the cytoplasm. Its function is as follows. Catalyzes the GTP-dependent ribosomal translocation step during translation elongation. During this step, the ribosome changes from the pre-translocational (PRE) to the post-translocational (POST) state as the newly formed A-site-bound peptidyl-tRNA and P-site-bound deacylated tRNA move to the P and E sites, respectively. Catalyzes the coordinated movement of the two tRNA molecules, the mRNA and conformational changes in the ribosome. The sequence is that of Elongation factor G from Chlorobaculum tepidum (strain ATCC 49652 / DSM 12025 / NBRC 103806 / TLS) (Chlorobium tepidum).